The primary structure comprises 194 residues: Peptidyl-tRNA hydrolase (194 aa).

Y19 contacts tRNA. Catalysis depends on H24, which acts as the Proton acceptor. Residues F69, N71, and N117 each coordinate tRNA.

The protein belongs to the PTH family. In terms of assembly, monomer.

It localises to the cytoplasm. The catalysed reaction is an N-acyl-L-alpha-aminoacyl-tRNA + H2O = an N-acyl-L-amino acid + a tRNA + H(+). Functionally, hydrolyzes ribosome-free peptidyl-tRNAs (with 1 or more amino acids incorporated), which drop off the ribosome during protein synthesis, or as a result of ribosome stalling. Catalyzes the release of premature peptidyl moieties from peptidyl-tRNA molecules trapped in stalled 50S ribosomal subunits, and thus maintains levels of free tRNAs and 50S ribosomes. This is Peptidyl-tRNA hydrolase from Neorickettsia sennetsu (strain ATCC VR-367 / Miyayama) (Ehrlichia sennetsu).